We begin with the raw amino-acid sequence, 141 residues long: Nucleoside diphosphate kinase (141 aa).

ATP contacts are provided by Lys11, Phe59, Arg87, Thr93, Arg104, and Asn114. The active-site Pros-phosphohistidine intermediate is the His117.

It belongs to the NDK family. In terms of assembly, homotetramer. Requires Mg(2+) as cofactor.

Its subcellular location is the cytoplasm. It catalyses the reaction a 2'-deoxyribonucleoside 5'-diphosphate + ATP = a 2'-deoxyribonucleoside 5'-triphosphate + ADP. The enzyme catalyses a ribonucleoside 5'-diphosphate + ATP = a ribonucleoside 5'-triphosphate + ADP. In terms of biological role, major role in the synthesis of nucleoside triphosphates other than ATP. The ATP gamma phosphate is transferred to the NDP beta phosphate via a ping-pong mechanism, using a phosphorylated active-site intermediate. The protein is Nucleoside diphosphate kinase of Pseudomonas putida (strain W619).